The chain runs to 60 residues: Sec-independent protein translocase protein TatA (60 aa).

A helical transmembrane segment spans residues 1-21; that stretch reads MTPAGPAQLLIVALVVIVLFG.

It belongs to the TatA/E family. In terms of assembly, the Tat system comprises two distinct complexes: a TatABC complex, containing multiple copies of TatA, TatB and TatC subunits, and a separate TatA complex, containing only TatA subunits. Substrates initially bind to the TatABC complex, which probably triggers association of the separate TatA complex to form the active translocon.

It is found in the cell membrane. Part of the twin-arginine translocation (Tat) system that transports large folded proteins containing a characteristic twin-arginine motif in their signal peptide across membranes. TatA could form the protein-conducting channel of the Tat system. The sequence is that of Sec-independent protein translocase protein TatA from Corynebacterium glutamicum (strain R).